Reading from the N-terminus, the 310-residue chain is Porphobilinogen deaminase (310 aa).

Cys243 is subject to S-(dipyrrolylmethanemethyl)cysteine.

This sequence belongs to the HMBS family. In terms of assembly, monomer. The cofactor is dipyrromethane.

It carries out the reaction 4 porphobilinogen + H2O = hydroxymethylbilane + 4 NH4(+). It participates in porphyrin-containing compound metabolism; protoporphyrin-IX biosynthesis; coproporphyrinogen-III from 5-aminolevulinate: step 2/4. Functionally, tetrapolymerization of the monopyrrole PBG into the hydroxymethylbilane pre-uroporphyrinogen in several discrete steps. This chain is Porphobilinogen deaminase, found in Mannheimia succiniciproducens (strain KCTC 0769BP / MBEL55E).